Consider the following 341-residue polypeptide: L-threonine 3-dehydrogenase (341 aa).

C38 provides a ligand contact to Zn(2+). Residues T40 and H43 each act as charge relay system in the active site. 6 residues coordinate Zn(2+): H63, E64, C93, C96, C99, and C107. NAD(+)-binding positions include I175, D195, R200, 262–264, and 286–287; these read LGI and IY.

Belongs to the zinc-containing alcohol dehydrogenase family. As to quaternary structure, homotetramer. Zn(2+) is required as a cofactor.

The protein resides in the cytoplasm. The catalysed reaction is L-threonine + NAD(+) = (2S)-2-amino-3-oxobutanoate + NADH + H(+). It participates in amino-acid degradation; L-threonine degradation via oxydo-reductase pathway; glycine from L-threonine: step 1/2. Catalyzes the NAD(+)-dependent oxidation of L-threonine to 2-amino-3-ketobutyrate. In Salmonella arizonae (strain ATCC BAA-731 / CDC346-86 / RSK2980), this protein is L-threonine 3-dehydrogenase.